A 142-amino-acid chain; its full sequence is Mediator of RNA polymerase II transcription subunit 9 (142 aa).

Positions 1–58 (MASSGVAGGRQAEDTLQPPPELLPESKPPPPPQPLPVAALPPPAAPRPQSPAGAKEEN) are disordered. Position 2 is an N-acetylalanine (alanine 2). The segment covering 17–49 (QPPPELLPESKPPPPPQPLPVAALPPPAAPRPQ) has biased composition (pro residues). A coiled-coil region spans residues 78 to 134 (DLHQDLNALKTKFQELRKLIGTMPGIHVSPEQQQQQLHSLREQVRTKNELLQKYKSL). Serine 106 is modified (phosphoserine).

The protein belongs to the Mediator complex subunit 9 family. As to quaternary structure, component of the Mediator complex, which is composed of MED1, MED4, MED6, MED7, MED8, MED9, MED10, MED11, MED12, MED13, MED13L, MED14, MED15, MED16, MED17, MED18, MED19, MED20, MED21, MED22, MED23, MED24, MED25, MED26, MED27, MED29, MED30, MED31, CCNC, CDK8 and CDC2L6/CDK11. The MED12, MED13, CCNC and CDK8 subunits form a distinct module termed the CDK8 module. Mediator containing the CDK8 module is less active than Mediator lacking this module in supporting transcriptional activation. Individual preparations of the Mediator complex lacking one or more distinct subunits have been variously termed ARC, CRSP, DRIP, PC2, SMCC and TRAP.

It is found in the nucleus. Component of the Mediator complex, a coactivator involved in the regulated transcription of nearly all RNA polymerase II-dependent genes. Mediator functions as a bridge to convey information from gene-specific regulatory proteins to the basal RNA polymerase II transcription machinery. Mediator is recruited to promoters by direct interactions with regulatory proteins and serves as a scaffold for the assembly of a functional preinitiation complex with RNA polymerase II and the general transcription factors. The chain is Mediator of RNA polymerase II transcription subunit 9 (Med9) from Mus musculus (Mouse).